The chain runs to 207 residues: MIRKCTDHGYFRGGSCQQCKRPGRYVLDDGREEKLGRFVSGTLRHFPASAGVKMDKYGWIDLNAFCEVMKKRYNWMRKEYLYALVESDEKGRYQISGPMIRARYGHSVNVDLDYDESDTPYVYYGASPEEVDVLLENGIFPIKQRYVHLSTTYEKAAEVALIHTESPVILQVDAFRAQEDGISLKLATDYIVLAEKIPPDYLFVLED.

Belongs to the KptA/TPT1 family.

In terms of biological role, removes the 2'-phosphate from RNA via an intermediate in which the phosphate is ADP-ribosylated by NAD followed by a presumed transesterification to release the RNA and generate ADP-ribose 1''-2''-cyclic phosphate (APPR&gt;P). May function as an ADP-ribosylase. The protein is Probable RNA 2'-phosphotransferase of Methanosarcina mazei (strain ATCC BAA-159 / DSM 3647 / Goe1 / Go1 / JCM 11833 / OCM 88) (Methanosarcina frisia).